We begin with the raw amino-acid sequence, 210 residues long: Large ribosomal subunit protein uL15 (210 aa).

Disordered regions lie at residues 1–64 (MADD…AAPR) and 76–104 (AAGAKKEKTRVGRGEGSKGKTAGRGTKGT). Low complexity predominate over residues 9–54 (EAAAKPVAEKATATALAKKAPAKAAAADKAAPAAKGETVAAKPAKA). A compositionally biased stretch (basic and acidic residues) spans 79-93 (AKKEKTRVGRGEGSK).

The protein belongs to the universal ribosomal protein uL15 family. In terms of assembly, part of the 50S ribosomal subunit.

In terms of biological role, binds to the 23S rRNA. The chain is Large ribosomal subunit protein uL15 from Leifsonia xyli subsp. xyli (strain CTCB07).